The following is a 283-amino-acid chain: Undecaprenyl-diphosphatase (283 aa).

8 consecutive transmembrane segments (helical) span residues 4–24 (LLIL…FLPI), 45–65 (ADLF…YEYW), 91–111 (QLGL…FTLA), 118–138 (LFNP…IFYV), 153–173 (VSLK…IPGT), 194–214 (AEFS…LDLL), 228–248 (ILGV…RWLV), and 258–278 (IFAW…WIFG).

Belongs to the UppP family.

It localises to the cell inner membrane. The catalysed reaction is di-trans,octa-cis-undecaprenyl diphosphate + H2O = di-trans,octa-cis-undecaprenyl phosphate + phosphate + H(+). In terms of biological role, catalyzes the dephosphorylation of undecaprenyl diphosphate (UPP). Confers resistance to bacitracin. The protein is Undecaprenyl-diphosphatase of Psychrobacter sp. (strain PRwf-1).